A 227-amino-acid chain; its full sequence is PKHD-type hydroxylase Bpro_3048 (227 aa).

One can recognise a Fe2OG dioxygenase domain in the interval 78–179 (KIFTPRINRY…RLACFFWVES (102 aa)). Fe cation contacts are provided by His97, Asp99, and His160. Position 170 (Arg170) interacts with 2-oxoglutarate.

Requires Fe(2+) as cofactor. It depends on L-ascorbate as a cofactor.

The sequence is that of PKHD-type hydroxylase Bpro_3048 from Polaromonas sp. (strain JS666 / ATCC BAA-500).